Here is a 264-residue protein sequence, read N- to C-terminus: MHQYHDLLERILSDGAEKHDRTGTGTLSVFGHQMRFNLGAGFPLVTTKRLPLKAIVHELLWFLRGDTNIKYLHDHGVTIWDEWADANGDLGPVYGYQWRSWPTPDGGHIDQIANVIDMIKRNPDSRRLIVTAWNPADVEKMALPPCHCLFQFYVVNGKLSCQLYQRSADVFLGVPFNIASYALLTMMVAQVTGLKPGEFVHSFGDVHLYSNHVEQARLQLTRAPRSLPTMTLNPDVKDIFAFRYEDFALAGYDPHPHIKAEVAV.

Residues arginine 21 and 126–127 contribute to the dUMP site; that span reads RR. Cysteine 146 functions as the Nucleophile in the catalytic mechanism. Residues 166-169, asparagine 177, and 207-209 contribute to the dUMP site; these read RSAD and HLY. Aspartate 169 serves as a coordination point for (6R)-5,10-methylene-5,6,7,8-tetrahydrofolate. Residue alanine 263 coordinates (6R)-5,10-methylene-5,6,7,8-tetrahydrofolate.

It belongs to the thymidylate synthase family. Bacterial-type ThyA subfamily. In terms of assembly, homodimer.

It localises to the cytoplasm. The enzyme catalyses dUMP + (6R)-5,10-methylene-5,6,7,8-tetrahydrofolate = 7,8-dihydrofolate + dTMP. It functions in the pathway pyrimidine metabolism; dTTP biosynthesis. Its function is as follows. Catalyzes the reductive methylation of 2'-deoxyuridine-5'-monophosphate (dUMP) to 2'-deoxythymidine-5'-monophosphate (dTMP) while utilizing 5,10-methylenetetrahydrofolate (mTHF) as the methyl donor and reductant in the reaction, yielding dihydrofolate (DHF) as a by-product. This enzymatic reaction provides an intracellular de novo source of dTMP, an essential precursor for DNA biosynthesis. The protein is Thymidylate synthase of Bradyrhizobium sp. (strain BTAi1 / ATCC BAA-1182).